A 536-amino-acid polypeptide reads, in one-letter code: Trigger factor (536 aa).

The PPIase FKBP-type domain occupies 164–249 (GDQVIIDFAG…VKEVKVPAAT (86 aa)). The tract at residues 439–536 (IEADDDSGHV…APAKKAAAKK (98 aa)) is disordered. The span at 472–502 (TKKEAVKDEAKAEEAPAKKAPAKKAEPKAEA) shows a compositional bias: basic and acidic residues. Residues 503-515 (KPAAAKKAAPAKA) show a composition bias toward low complexity. A compositionally biased stretch (basic and acidic residues) spans 516-525 (AAEEKAEPAK). Basic residues predominate over residues 527–536 (APAKKAAAKK).

The protein belongs to the FKBP-type PPIase family. Tig subfamily.

It localises to the cytoplasm. The catalysed reaction is [protein]-peptidylproline (omega=180) = [protein]-peptidylproline (omega=0). In terms of biological role, involved in protein export. Acts as a chaperone by maintaining the newly synthesized protein in an open conformation. Functions as a peptidyl-prolyl cis-trans isomerase. This chain is Trigger factor, found in Sphingopyxis alaskensis (strain DSM 13593 / LMG 18877 / RB2256) (Sphingomonas alaskensis).